Here is a 135-residue protein sequence, read N- to C-terminus: Ribosome-binding factor A (135 aa).

It belongs to the RbfA family. In terms of assembly, monomer. Binds 30S ribosomal subunits, but not 50S ribosomal subunits or 70S ribosomes.

The protein resides in the cytoplasm. In terms of biological role, one of several proteins that assist in the late maturation steps of the functional core of the 30S ribosomal subunit. Associates with free 30S ribosomal subunits (but not with 30S subunits that are part of 70S ribosomes or polysomes). Required for efficient processing of 16S rRNA. May interact with the 5'-terminal helix region of 16S rRNA. In Methylobacterium nodulans (strain LMG 21967 / CNCM I-2342 / ORS 2060), this protein is Ribosome-binding factor A.